We begin with the raw amino-acid sequence, 658 residues long: Glycogen debranching enzyme (658 aa).

Catalysis depends on Asp336, which acts as the Nucleophile. Glu371 functions as the Proton donor in the catalytic mechanism. The interval Glu459 to Gly484 is disordered.

The protein belongs to the glycosyl hydrolase 13 family.

It carries out the reaction Hydrolysis of (1-&gt;6)-alpha-D-glucosidic linkages to branches with degrees of polymerization of three or four glucose residues in limit dextrin.. The protein operates within glycan degradation; glycogen degradation. Removes maltotriose and maltotetraose chains that are attached by 1,6-alpha-linkage to the limit dextrin main chain, generating a debranched limit dextrin. This chain is Glycogen debranching enzyme, found in Salmonella paratyphi A (strain ATCC 9150 / SARB42).